A 396-amino-acid polypeptide reads, in one-letter code: tRNA (guanine-N(7)-)-methyltransferase (396 aa).

The S-adenosyl-L-methionine site is built by glutamate 125, glutamate 150, and aspartate 177. Residues lysine 203 and aspartate 233 each coordinate substrate.

Belongs to the class I-like SAM-binding methyltransferase superfamily. TrmB family.

The enzyme catalyses guanosine(46) in tRNA + S-adenosyl-L-methionine = N(7)-methylguanosine(46) in tRNA + S-adenosyl-L-homocysteine. Its pathway is tRNA modification; N(7)-methylguanine-tRNA biosynthesis. In terms of biological role, catalyzes the formation of N(7)-methylguanine at position 46 (m7G46) in tRNA. The polypeptide is tRNA (guanine-N(7)-)-methyltransferase (Helicobacter hepaticus (strain ATCC 51449 / 3B1)).